The following is an 87-amino-acid chain: Alpha-elapitoxin-Ls2a (87 aa).

Residues 1–21 form the signal peptide; the sequence is MKTLLLTLVVVTIVCLDLGYT. 5 disulfide bridges follow: Cys24–Cys41, Cys34–Cys62, Cys47–Cys51, Cys66–Cys77, and Cys78–Cys83.

This sequence belongs to the three-finger toxin family. Long-chain subfamily. Type II alpha-neurotoxin sub-subfamily. Expressed by the venom gland.

It localises to the secreted. Its function is as follows. Binds with high affinity to muscular (tested on Torpedo marmorata, Kd=1.6 nM) and neuronal (chimeric alpha-7/CHRNA7, Kd=3 nM) nicotinic acetylcholine receptor (nAChR) and inhibits acetylcholine from binding to the receptor, thereby impairing neuromuscular and neuronal transmission. Also shows a very weak inhibition on GABA(A) receptors. The toxin (10 uM) inhibits 83% of current in channels composed of alpha-1-beta-3-gamma-2 (GABRA1-GABRB3-GABRG2) subunits, 39% of current in channels composed of alpha-2-beta-2-gamma-2 (GABRA2-GABRB2-GABRG2) subunits, and 33% of current in channels composed of alpha-5-beta-2-gamma-2 (GABRA5-GABRB2-GABRG2) subunits. This Laticauda semifasciata (Black-banded sea krait) protein is Alpha-elapitoxin-Ls2a.